A 94-amino-acid polypeptide reads, in one-letter code: Large ribosomal subunit protein bL25 (94 aa).

The protein belongs to the bacterial ribosomal protein bL25 family. Part of the 50S ribosomal subunit; part of the 5S rRNA/L5/L18/L25 subcomplex. Contacts the 5S rRNA. Binds to the 5S rRNA independently of L5 and L18.

Its function is as follows. This is one of the proteins that binds to the 5S RNA in the ribosome where it forms part of the central protuberance. The chain is Large ribosomal subunit protein bL25 from Sodalis glossinidius (strain morsitans).